The sequence spans 179 residues: Large ribosomal subunit protein uL6 (179 aa).

It belongs to the universal ribosomal protein uL6 family. Part of the 50S ribosomal subunit.

Its function is as follows. This protein binds to the 23S rRNA, and is important in its secondary structure. It is located near the subunit interface in the base of the L7/L12 stalk, and near the tRNA binding site of the peptidyltransferase center. The polypeptide is Large ribosomal subunit protein uL6 (Synechococcus sp. (strain RCC307)).